A 382-amino-acid polypeptide reads, in one-letter code: Lipid-A-disaccharide synthase (382 aa).

This sequence belongs to the LpxB family.

The enzyme catalyses 2-N,3-O-bis[(3R)-3-hydroxytetradecanoyl]-alpha-D-glucosaminyl 1-phosphate + UDP-2-N,3-O-bis[(3R)-3-hydroxytetradecanoyl]-alpha-D-glucosamine = lipid A disaccharide (E. coli) + UDP + H(+). It catalyses the reaction a lipid X + a UDP-2-N,3-O-bis[(3R)-3-hydroxyacyl]-alpha-D-glucosamine = a lipid A disaccharide + UDP + H(+). It participates in glycolipid biosynthesis; lipid IV(A) biosynthesis; lipid IV(A) from (3R)-3-hydroxytetradecanoyl-[acyl-carrier-protein] and UDP-N-acetyl-alpha-D-glucosamine: step 5/6. Functionally, condensation of UDP-2,3-diacylglucosamine and 2,3-diacylglucosamine-1-phosphate to form lipid A disaccharide, a precursor of lipid A, a phosphorylated glycolipid that anchors the lipopolysaccharide to the outer membrane of the cell. This Escherichia coli (strain K12 / MC4100 / BW2952) protein is Lipid-A-disaccharide synthase.